A 324-amino-acid chain; its full sequence is Lactonase drp35 (324 aa).

Residues E47, S109, G111, D129, T132, Y134, D137, N184, D235, and S236 each coordinate Ca(2+). D235 acts as the Proton donor in catalysis.

The protein belongs to the SMP-30/CGR1 family. Requires Ca(2+) as cofactor.

The protein localises to the cytoplasm. Exhibits lactonase activity. Acts in cells with perturbed membrane integrity and is possibly related to the membrane homeostasis. This Staphylococcus aureus (strain MW2) protein is Lactonase drp35 (drp35).